Reading from the N-terminus, the 243-residue chain is Aquaporin SIP1-2 (243 aa).

The next 2 helical transmembrane spans lie at 9 to 29 (AAAA…TLGA) and 45 to 65 (FALL…NILC). The NPA 1 motif lies at 74–76 (NPT). 3 helical membrane-spanning segments follow: residues 98–118 (LPAQ…LMPA), 136–156 (GAGA…LIIV), and 163–183 (IIKT…GAAY). The NPA 2 motif lies at 189-191 (NPA). A helical transmembrane segment spans residues 211–231 (VYWICPFIGAILAAWIFRAMF).

This sequence belongs to the MIP/aquaporin (TC 1.A.8) family. SIP (TC 1.A.8.10) subfamily.

Its subcellular location is the membrane. Aquaporins facilitate the transport of water and small neutral solutes across cell membranes. In Zea mays (Maize), this protein is Aquaporin SIP1-2 (SIP1-2).